Here is a 154-residue protein sequence, read N- to C-terminus: 6,7-dimethyl-8-ribityllumazine synthase (154 aa).

5-amino-6-(D-ribitylamino)uracil-binding positions include F26, 60-62 (ALE), and 84-86 (CII). 89 to 90 (ET) provides a ligand contact to (2S)-2-hydroxy-3-oxobutyl phosphate. Residue H92 is the Proton donor of the active site. Residue N117 participates in 5-amino-6-(D-ribitylamino)uracil binding. (2S)-2-hydroxy-3-oxobutyl phosphate is bound at residue R131.

It belongs to the DMRL synthase family.

The catalysed reaction is (2S)-2-hydroxy-3-oxobutyl phosphate + 5-amino-6-(D-ribitylamino)uracil = 6,7-dimethyl-8-(1-D-ribityl)lumazine + phosphate + 2 H2O + H(+). Its pathway is cofactor biosynthesis; riboflavin biosynthesis; riboflavin from 2-hydroxy-3-oxobutyl phosphate and 5-amino-6-(D-ribitylamino)uracil: step 1/2. In terms of biological role, catalyzes the formation of 6,7-dimethyl-8-ribityllumazine by condensation of 5-amino-6-(D-ribitylamino)uracil with 3,4-dihydroxy-2-butanone 4-phosphate. This is the penultimate step in the biosynthesis of riboflavin. This chain is 6,7-dimethyl-8-ribityllumazine synthase, found in Leptothrix cholodnii (strain ATCC 51168 / LMG 8142 / SP-6) (Leptothrix discophora (strain SP-6)).